A 481-amino-acid polypeptide reads, in one-letter code: Pentatricopeptide repeat-containing protein 8, mitochondrial (481 aa).

A mitochondrion-targeting transit peptide spans 1 to 55 (MQGFGSQIFRKLLRSSNAKVSDALLQNTRTLFTAPPLHSGLQTSFTAETQQHVRQ). 2 PPR repeats span residues 137–172 (SARFWRIMLQSYIDLNLFDKASLIADMSLSHMEFLP) and 365–399 (SISTANTLFSIASRLKDVKWLSAGFDMIDKYGLKP).

It is found in the mitochondrion. Its function is as follows. Mitochondrial RNA-binding protein involved in mitochondrial translation. The cox1 mRNA is one target but it is not clear if ppr8 has a single or multiple targets. This Schizosaccharomyces pombe (strain 972 / ATCC 24843) (Fission yeast) protein is Pentatricopeptide repeat-containing protein 8, mitochondrial (ppr8).